A 143-amino-acid polypeptide reads, in one-letter code: Transcription antitermination protein NusB (143 aa).

The protein belongs to the NusB family.

In terms of biological role, involved in transcription antitermination. Required for transcription of ribosomal RNA (rRNA) genes. Binds specifically to the boxA antiterminator sequence of the ribosomal RNA (rrn) operons. The polypeptide is Transcription antitermination protein NusB (Buchnera aphidicola subsp. Acyrthosiphon pisum (strain APS) (Acyrthosiphon pisum symbiotic bacterium)).